We begin with the raw amino-acid sequence, 78 residues long: Acyl carrier protein (78 aa).

In terms of domain architecture, Carrier spans 2-77; it reads SDIASRVKAI…QAISYIEEAK (76 aa). Position 37 is an O-(pantetheine 4'-phosphoryl)serine (Ser-37).

The protein belongs to the acyl carrier protein (ACP) family. Post-translationally, 4'-phosphopantetheine is transferred from CoA to a specific serine of apo-ACP by AcpS. This modification is essential for activity because fatty acids are bound in thioester linkage to the sulfhydryl of the prosthetic group.

It is found in the cytoplasm. The protein operates within lipid metabolism; fatty acid biosynthesis. Carrier of the growing fatty acid chain in fatty acid biosynthesis. This chain is Acyl carrier protein, found in Flavobacterium johnsoniae (strain ATCC 17061 / DSM 2064 / JCM 8514 / BCRC 14874 / CCUG 350202 / NBRC 14942 / NCIMB 11054 / UW101) (Cytophaga johnsonae).